Here is an 824-residue protein sequence, read N- to C-terminus: Molybdenum cofactor sulfurase (824 aa).

An N6-(pyridoxal phosphate)lysine modification is found at Lys-274. The active site involves Cys-433. The region spanning 655–822 (CSSSKYRSCT…LQVGQQVYPS (168 aa)) is the MOSC domain.

Belongs to the class-V pyridoxal-phosphate-dependent aminotransferase family. MOCOS subfamily. It depends on pyridoxal 5'-phosphate as a cofactor.

The enzyme catalyses Mo-molybdopterin + L-cysteine + AH2 = thio-Mo-molybdopterin + L-alanine + A + H2O. It participates in cofactor biosynthesis; molybdopterin biosynthesis. Sulfurates the molybdenum cofactor. Sulfation of molybdenum is essential for xanthine dehydrogenase (XDH) and aldehyde oxidase (ADO) enzymes in which molybdenum cofactor is liganded by 1 oxygen and 1 sulfur atom in active form. This Oryza sativa subsp. japonica (Rice) protein is Molybdenum cofactor sulfurase (MCSU3).